A 1348-amino-acid chain; its full sequence is MRSPRTFTFYFLLLVICSSEAALSTPTEPIVQPSILQEHELAGEELLRPKRAAAAGDRVAEEYMVDIEISFENVSFLESIRAHLNNLSFPIRGTEADILNIAMTTVCTPAGNDLLCFCEKGYQWSEERCLHSLTCQDYDSALPGGYCSCLKGLPPQGPFCQLPEAFITLKLKVRLNIGFQEDLKNTSSALYRSYKTDLERAFRAGYRTLPGFRSVTVTQFTKGSVVVNYVVRVTSAPLPGSIHKANEQVIQNLNHTYKMDYNSFQGTPSNETKFTVIPEFIFEGDNVTLECETEFVTSNTSWYYGEKRSDIQNSDKYSIHTTVINNISLITRLTIYNFTQHDAGMYGCNVTLDIFEYGTVRKLDVTPIRILAKEERKVVCDNHPISLNCCSENIANWSSIEWKQEGKISILGNPESDLESSCSTYTLKADGTQCPSGSSGTTVIYTCEFVSAYGARGSKNIAVTFTSVANLTITRDPISVSEGQSFSITCLSDVSSFDEVYWNTSAGIKIHPRFYTMRRYQDGAESVLMVKTSTREWNGTYHCIFRYKNSYSIATKDVTVHPLPLVSDIMMDPLEASGLCTSSHQFKCCVEEDAGEEYAVTFHVDSSSFPAEREVIGKQACYTYSLPANLPRCPKDIAVFCHFTNAANSSVRSPSMKLKLIPRENVTCQDPIIGIGDPGKVIQKLCQFSGVYGSPGQAIGGTVTYKCVGTQWKEESRACISAPINGLLQVAKALIKSPTQDQKLPTYLRDLSVSAGKEEQDIRSSPGSLGAIISILDLLSTVPTQVNSEMMRDILATINVILDKSALNSWEKLLQQQSNQSSQFLHSVERFSQALQLGDSTPPFLAHPNVQMKSMVIKRGHPQIYQQQFIFKDSDLWGDVAIDECQLGNLQPDSSIVTVAFPTLKAILAQDVQRKTSSNSLVMTTTVSHNIVKPFRISMTFKNNHRSGGKPQCVFWNFSLANNTGGWDSSGCSVEDDGRDNRDRVFCKCNHLTSFSILMSPDSPDPGSLLKILLDIISYIGLGFSIVSLAACLVVEAMVWKSVTKNRTSYMRHICIVNIAFCLLIADIWFIVAGAIHDGRYPLNETACVAATFFIHFFYLSVFFWMLTLGLMLFYRLIFILHDASKSTQKAIAFSLGYGCPLIISSITVGVTQPQEVYMRKNACWLNWEDTRALLAFAIPALIIVVVNVSITVVVITKILRPSIGDKPGKQEKSSLFQISKSIGVLTPLLGLTWGFGLATVIQGSNAVFHIIFTLLNAFQGLFILLFGCLWDQKVQEALLHKFSLSRWSSQHSKSTSIGSSTPVFSMSSPISRRFNNLFGKTGTYNVSTPETTSSSLENSSSAYSLLN.

An N-terminal signal peptide occupies residues 1–21 (MRSPRTFTFYFLLLVICSSEA). The Extracellular segment spans residues 22–1019 (ALSTPTEPIV…LKILLDIISY (998 aa)). Residues 163 to 271 (PEAFITLKLK…NSFQGTPSNE (109 aa)) form the SEA domain. Ig-like domains follow at residues 268–366 (PSNE…LDVT), 367–464 (PIRI…IAVT), and 469–559 (ANLT…KDVT). N-linked (GlcNAc...) asparagine glycans are attached at residues Asn270, Asn286, Asn337, and Asn349. Cys291 and Cys348 are oxidised to a cystine. Cys389 and Cys447 are joined by a disulfide. N-linked (GlcNAc...) asparagine glycans are attached at residues Asn470, Asn538, and Asn665. An intrachain disulfide couples Cys490 to Cys543. The residue at position 818 (Ser818) is a Phosphoserine. The GAIN-B domain maps to 841–1005 (TPPFLAHPNV…SILMSPDSPD (165 aa)). 2 disulfide bridges follow: Cys953–Cys987 and Cys972–Cys989. Residues 953-1005 (CVFWNFSLANNTGGWDSSGCSVEDDGRDNRDRVFCKCNHLTSFSILMSPDSPD) form a GPS region. Positions 993-1008 (TSFSILMSPDSPDPGS) are tethered agonist. A helical membrane pass occupies residues 1020–1040 (IGLGFSIVSLAACLVVEAMVW). Topologically, residues 1041–1055 (KSVTKNRTSYMRHIC) are cytoplasmic. A helical transmembrane segment spans residues 1056–1076 (IVNIAFCLLIADIWFIVAGAI). The Extracellular portion of the chain corresponds to 1077-1092 (HDGRYPLNETACVAAT). A helical transmembrane segment spans residues 1093 to 1113 (FFIHFFYLSVFFWMLTLGLML). The Cytoplasmic segment spans residues 1114–1130 (FYRLIFILHDASKSTQK). The chain crosses the membrane as a helical span at residues 1131 to 1151 (AIAFSLGYGCPLIISSITVGV). Over 1152–1175 (TQPQEVYMRKNACWLNWEDTRALL) the chain is Extracellular. A helical membrane pass occupies residues 1176–1196 (AFAIPALIIVVVNVSITVVVI). The Cytoplasmic segment spans residues 1197-1221 (TKILRPSIGDKPGKQEKSSLFQISK). A helical transmembrane segment spans residues 1222 to 1242 (SIGVLTPLLGLTWGFGLATVI). The Extracellular segment spans residues 1243 to 1250 (QGSNAVFH). Residues 1251–1271 (IIFTLLNAFQGLFILLFGCLW) traverse the membrane as a helical segment. The Cytoplasmic portion of the chain corresponds to 1272–1348 (DQKVQEALLH…NSSSAYSLLN (77 aa)). Residue Thr1302 is modified to Phosphothreonine. Ser1309 bears the Phosphoserine mark. Positions 1328–1348 (STPETTSSSLENSSSAYSLLN) are disordered.

Belongs to the G-protein coupled receptor 2 family. Adhesion G-protein coupled receptor (ADGR) subfamily. As to quaternary structure, homodimer; disulfide-linked. Heterodimer of 2 chains generated by proteolytic processing; the large extracellular N-terminal fragment and the membrane-bound C-terminal fragment predominantly remain associated and non-covalently linked. Fragment generates by the processing enzyme furin remains attached to the extracellular N-terminal fragment. Interacts (via N-terminal extracellular domain) with SFTPD. Post-translationally, highly glycosylated. Proteolytically cleaved at multiple sites: one in the GPS region of the GAIN-B domain (S1 site) and the other in the SEA domain (S2 site). The proteolytic cleavage at S1 site generates an extracellular subunit and a seven-transmembrane subunit. The proteolytic cleavage at S2 site generates a fragment that undergoes proteolytic cleavage by the processing enzyme furin. Widely expressed, with highest levels in lung, pancreas, kidney and heart. In the kidney, expressed more abundantly in the medulla than in the cortex, predominantly expressed in A-intercalated cells (at protein level). Expressed in endothelial cells from various tissues, including brain, heart, kidney, liver, lung and muscle. In the lung, expressed in alveolar type II (ATII) cells (at protein level). Expressed in pancreatic islets of Langerhans, predominantly in delta cells, as well as in endothelial cells. Expressed in white adipose tissue.

Its subcellular location is the cell membrane. Its activity is regulated as follows. As an adhesion G protein-coupled receptor (aGPCR) exhibits a large N-terminal extracellular domain containing highly conserved GPCR autoproteolysis-inducing (GAIN) domain. During synthesis, intracellular autoproteolytic processing of nascent chain within the GAIN domain generates a mature protein, consisting of an N-terminal fragment that is non-covalently linked to the C-terminal fragment. The mature protein is routed to the plasma membrane where the N- and C-terminal fragments remain associated, forming the holoreceptor. Dissociation of the aGPCR fragments stimulates G protein signaling through the action of the tethered-peptide agonist stalk that is occluded within the GAIN domain in the holoreceptor form. This dissociation might be induced by ligand binding, such as that of sFNDC4. Adhesion G protein-coupled receptor. In alveolar type II (ATII or AT2) cells, required for normal lung surfactant homeostasis. Modulation of both surfactant secretion and uptake by ATII cells is mediated by the downstream activation of GNAQ/GNA11 proteins and may be a consequence of increased cortical F-actin assembly induced by ADGRF5 activation. In the kidney, may play a role in the regulation of acid excretion into the primary urine, possibly by regulating the surface expression of V-ATPase proton pump. As a receptor for soluble FNDC4 (sFNDC4), required for proper systemic glucose tolerance, specifically sensitizing white adipose tissue to insulin. Also plays a role in sFNDC4-induced decrease of local inflammation in white adipose tissue. The protein is Adhesion G protein-coupled receptor F5 (Adgrf5) of Mus musculus (Mouse).